Here is a 391-residue protein sequence, read N- to C-terminus: Phosphoglycerate kinase (391 aa).

Substrate is bound by residues 21-23 (DLN), Arg-36, 59-62 (HLGR), Arg-113, and Arg-146. Residues Lys-197, Glu-319, and 345-348 (GGDT) contribute to the ATP site.

This sequence belongs to the phosphoglycerate kinase family. In terms of assembly, monomer.

The protein localises to the cytoplasm. The enzyme catalyses (2R)-3-phosphoglycerate + ATP = (2R)-3-phospho-glyceroyl phosphate + ADP. It participates in carbohydrate degradation; glycolysis; pyruvate from D-glyceraldehyde 3-phosphate: step 2/5. The sequence is that of Phosphoglycerate kinase from Xanthomonas oryzae pv. oryzae (strain MAFF 311018).